The following is a 350-amino-acid chain: MSKGLPEARTDAAMSELVPEPRPKPAVPMKPVSINSNLLGYIGIDTIIEQMRKKTMKTGFDFNIMVVGQSGLGKSTLVNTLFKSQVSRKASSWNREEKIPKTVEIKAIGHVIEEGGVKMKLTVIDTPGFGDQINNENCWEPIEKYINEQYEKFLKEEVNIARKKRIPDTRVHCCLYFISPTGHSLRPLDLEFMKHLSKVVNIIPVIAKADTMTLEEKSEFKQRVRKELEVNGIEFYPQKEFDEDLEDKTENDKIRQESMPFAVVGSDKEYQVNGKRVLGRKTPWGIIEVENLNHCEFALLRDFVIRTHLQDLKEVTHNIHYETYRAKRLNDNGGLPPVSVDTEESHDSNP.

A compositionally biased stretch (basic and acidic residues) spans 1–10 (MSKGLPEART). A disordered region spans residues 1–29 (MSKGLPEARTDAAMSELVPEPRPKPAVPM). One can recognise a Septin-type G domain in the interval 58-331 (TGFDFNIMVV…ETYRAKRLND (274 aa)). Residues 68–75 (GQSGLGKS) are G1 motif. Residue 68 to 75 (GQSGLGKS) coordinates GTP. At Ser-91 the chain carries Phosphoserine. Position 102 (Thr-102) interacts with GTP. Positions 125 to 128 (DTPG) are G3 motif. The tract at residues 207–210 (AKAD) is G4 motif. GTP-binding positions include 208-216 (KADTMTLEE), Gly-265, and Arg-280. A disordered region spans residues 328-350 (RLNDNGGLPPVSVDTEESHDSNP).

Belongs to the TRAFAC class TrmE-Era-EngA-EngB-Septin-like GTPase superfamily. Septin GTPase family. In terms of assembly, septins polymerize into heterooligomeric protein complexes that form filaments, and can associate with cellular membranes, actin filaments and microtubules. GTPase activity is required for filament formation. In terms of processing, phosphorylated by PKG on serine residues. Phosphorylated by PKG on Ser-91. As to expression, expressed in the brain including the cerebrum, hippocampus and cerebellum (at protein level).

The protein resides in the cytoplasm. Its subcellular location is the cytoskeleton. It is found in the synapse. In terms of biological role, filament-forming cytoskeletal GTPase. May play a role in cytokinesis (Potential). This chain is Neuronal-specific septin-3, found in Mus musculus (Mouse).